Reading from the N-terminus, the 796-residue chain is Peroxisome proliferator-activated receptor gamma coactivator 1-alpha (796 aa).

K77 is subject to N6-acetyllysine. A disordered region spans residues P98–E138. Residues D114–P127 show a composition bias toward polar residues. The LXXLL motif motif lies at L142–L146. Position 144 is an N6-acetyllysine (K144). Phosphothreonine; by AMPK is present on T176. Residue K182 is modified to N6-acetyllysine. A disordered region spans residues Y211 to E274. Positions D217–T235 are enriched in basic and acidic residues. Positions T242–L258 are enriched in polar residues. An N6-acetyllysine mark is found at K252, K269, K276, and K319. Positions G288–Q349 are disordered. Residues G291–T337 form an interaction with PPARG region. Residues S332–K344 show a composition bias toward polar residues. 3 positions are modified to N6-acetyllysine: K345, K411, and K449. Positions E348–R796 are mediates interaction with RNF34. A disordered region spans residues H463 to F487. Basic and acidic residues predominate over residues D477–D486. At S537 the chain carries Phosphoserine; by AMPK. Disordered stretches follow at residues F541–E637 and Y648–R667. Low complexity predominate over residues R568–S603. A compositionally biased stretch (basic residues) spans S620–R629. Positions R675–R751 constitute an RRM domain. N6-acetyllysine is present on residues K756 and K777.

Homooligomer. Interacts with MYBBP1A; inhibits MYBBP1A transcriptional activation. Interacts with PRDM16, LPIN1 and PML. Interacts (via LXXLL motif) with RORA and RORC (via AF-2 motif); activates RORA and RORC transcriptional activation. Interacts with LRPPRC. Interacts with FOXO1. Interacts with NR5A2. Post-translationally, phosphorylation by AMPK in skeletal muscle increases activation of its own promoter. Phosphorylated by CLK2. In terms of processing, heavily acetylated by KAT2A/GCN5 under conditions of high nutrients, leading to inactivation of PPARGC1A. Deacetylated by SIRT1 in low nutrients/high NAD conditions, leading to its activation. Ubiquitinated. Ubiquitination by RNF34 induces proteasomal degradation.

The protein localises to the nucleus. It is found in the PML body. Its function is as follows. Transcriptional coactivator for steroid receptors and nuclear receptors. Greatly increases the transcriptional activity of PPARG and thyroid hormone receptor on the uncoupling protein promoter. Can regulate key mitochondrial genes that contribute to the program of adaptive thermogenesis. Plays an essential role in metabolic reprogramming in response to dietary availability through coordination of the expression of a wide array of genes involved in glucose and fatty acid metabolism. Acts as a key regulator of gluconeogenesis: stimulates hepatic gluconeogenesis by increasing the expression of gluconeogenic enzymes, and acting together with FOXO1 to promote the fasting gluconeogenic program. Induces the expression of PERM1 in the skeletal muscle in an ESRRA-dependent manner. Also involved in the integration of the circadian rhythms and energy metabolism. Required for oscillatory expression of clock genes, such as BMAL1 and NR1D1, through the coactivation of RORA and RORC, and metabolic genes, such as PDK4 and PEPCK. This Sus scrofa (Pig) protein is Peroxisome proliferator-activated receptor gamma coactivator 1-alpha (PPARGC1A).